The primary structure comprises 130 residues: Transcription antitermination protein NusB (130 aa).

The protein belongs to the NusB family.

Its function is as follows. Involved in transcription antitermination. Required for transcription of ribosomal RNA (rRNA) genes. Binds specifically to the boxA antiterminator sequence of the ribosomal RNA (rrn) operons. This chain is Transcription antitermination protein NusB, found in Macrococcus caseolyticus (strain JCSC5402) (Macrococcoides caseolyticum).